The following is a 490-amino-acid chain: Betaine aldehyde dehydrogenase (490 aa).

K(+) is bound by residues threonine 26, isoleucine 27, and aspartate 93. Position 150–152 (150–152 (GAW)) interacts with NAD(+). Lysine 162 (charge relay system) is an active-site residue. Position 176 to 179 (176 to 179 (KPSE)) interacts with NAD(+). Residue valine 180 participates in K(+) binding. Residue 230–233 (GVAS) coordinates NAD(+). Leucine 246 contacts K(+). Glutamate 252 serves as the catalytic Proton acceptor. 3 residues coordinate NAD(+): glycine 254, cysteine 286, and glutamate 387. Cysteine 286 acts as the Nucleophile in catalysis. Cysteine 286 carries the post-translational modification Cysteine sulfenic acid (-SOH). K(+)-binding residues include lysine 457 and glycine 460. Glutamate 464 (charge relay system) is an active-site residue.

It belongs to the aldehyde dehydrogenase family. As to quaternary structure, dimer of dimers. Requires K(+) as cofactor.

It carries out the reaction betaine aldehyde + NAD(+) + H2O = glycine betaine + NADH + 2 H(+). It participates in amine and polyamine biosynthesis; betaine biosynthesis via choline pathway; betaine from betaine aldehyde: step 1/1. In terms of biological role, involved in the biosynthesis of the osmoprotectant glycine betaine. Catalyzes the irreversible oxidation of betaine aldehyde to the corresponding acid. This Escherichia coli O6:H1 (strain CFT073 / ATCC 700928 / UPEC) protein is Betaine aldehyde dehydrogenase.